Here is a 546-residue protein sequence, read N- to C-terminus: Chaperonin GroEL (546 aa).

Residues 29 to 32 (TLGP), K50, 86 to 90 (DGTTT), G415, and D495 each bind ATP.

The protein belongs to the chaperonin (HSP60) family. In terms of assembly, forms a cylinder of 14 subunits composed of two heptameric rings stacked back-to-back. Interacts with the co-chaperonin GroES.

It is found in the cytoplasm. The catalysed reaction is ATP + H2O + a folded polypeptide = ADP + phosphate + an unfolded polypeptide.. In terms of biological role, together with its co-chaperonin GroES, plays an essential role in assisting protein folding. The GroEL-GroES system forms a nano-cage that allows encapsulation of the non-native substrate proteins and provides a physical environment optimized to promote and accelerate protein folding. The sequence is that of Chaperonin GroEL from Parabacteroides distasonis (strain ATCC 8503 / DSM 20701 / CIP 104284 / JCM 5825 / NCTC 11152).